A 257-amino-acid polypeptide reads, in one-letter code: Diacetyl reductase [(S)-acetoin forming] (257 aa).

6–30 is an NAD(+) binding site; sequence IITGAAGGLGKGIAERLANDGFNIV. Ser-139 is a substrate binding site. Tyr-152 functions as the Proton acceptor in the catalytic mechanism. Residue Lys-156 is part of the active site.

The protein belongs to the short-chain dehydrogenases/reductases (SDR) family.

The enzyme catalyses (S)-acetoin + NAD(+) = diacetyl + NADH + H(+). In terms of biological role, catalyzes the irreversible reduction of 2,3-butanediol to (S)-acetoin in the presence of NADH. This Staphylococcus epidermidis (strain ATCC 12228 / FDA PCI 1200) protein is Diacetyl reductase [(S)-acetoin forming] (butA).